The chain runs to 129 residues: ATP synthase epsilon chain (129 aa).

The protein belongs to the ATPase epsilon chain family. In terms of assembly, F-type ATPases have 2 components, CF(1) - the catalytic core - and CF(0) - the membrane proton channel. CF(1) has five subunits: alpha(3), beta(3), gamma(1), delta(1), epsilon(1). CF(0) has three main subunits: a, b and c.

It is found in the cell inner membrane. Its function is as follows. Produces ATP from ADP in the presence of a proton gradient across the membrane. The sequence is that of ATP synthase epsilon chain from Campylobacter jejuni subsp. doylei (strain ATCC BAA-1458 / RM4099 / 269.97).